The sequence spans 795 residues: Phenylalanine--tRNA ligase beta subunit (795 aa).

The tRNA-binding domain maps to 39-148 (AGVFDGVKVG…ENAPIGMDFR (110 aa)). Residues 401 to 476 (PKPNQVALRR…RIYGYNNIPN (76 aa)) enclose the B5 domain. Residues Asp-454, Asp-460, Glu-463, and Glu-464 each contribute to the Mg(2+) site. The FDX-ACB domain occupies 701 to 794 (SKFPANRRDI…VSAQFGAALR (94 aa)).

This sequence belongs to the phenylalanyl-tRNA synthetase beta subunit family. Type 1 subfamily. In terms of assembly, tetramer of two alpha and two beta subunits. It depends on Mg(2+) as a cofactor.

It is found in the cytoplasm. It catalyses the reaction tRNA(Phe) + L-phenylalanine + ATP = L-phenylalanyl-tRNA(Phe) + AMP + diphosphate + H(+). The sequence is that of Phenylalanine--tRNA ligase beta subunit (pheT) from Vibrio cholerae serotype O1 (strain ATCC 39315 / El Tor Inaba N16961).